The primary structure comprises 119 residues: Large ribosomal subunit protein uL22 (119 aa).

This sequence belongs to the universal ribosomal protein uL22 family. Part of the 50S ribosomal subunit.

This protein binds specifically to 23S rRNA; its binding is stimulated by other ribosomal proteins, e.g. L4, L17, and L20. It is important during the early stages of 50S assembly. It makes multiple contacts with different domains of the 23S rRNA in the assembled 50S subunit and ribosome. Functionally, the globular domain of the protein is located near the polypeptide exit tunnel on the outside of the subunit, while an extended beta-hairpin is found that lines the wall of the exit tunnel in the center of the 70S ribosome. The polypeptide is Large ribosomal subunit protein uL22 (Chlorobium phaeovibrioides (strain DSM 265 / 1930) (Prosthecochloris vibrioformis (strain DSM 265))).